A 233-amino-acid polypeptide reads, in one-letter code: Esterase FUS5 (233 aa).

Active-site charge relay system residues include Ser105, Asp159, and His187.

This sequence belongs to the LovG family.

Its function is as follows. Esterase; part of the gene cluster that mediates the biosynthesis of the mycotoxin fusarin C. Within the cluster, FUS1, FUS2, FUS8 and FUS9 are sufficient for fusarin production. The other FUS cluster members are not essential for fusarin C biosynthesis. This is Esterase FUS5 from Gibberella moniliformis (strain M3125 / FGSC 7600) (Maize ear and stalk rot fungus).